Reading from the N-terminus, the 412-residue chain is Phytoene synthase 1, chloroplastic (412 aa).

Residues 1–129 constitute a chloroplast transit peptide; sequence MSVALLWVVS…AYDRCGEVCA (129 aa).

The protein belongs to the phytoene/squalene synthase family. As to quaternary structure, monomer. Interacts with SGR1.

The protein localises to the plastid. It localises to the chloroplast. It catalyses the reaction 2 (2E,6E,10E)-geranylgeranyl diphosphate = 15-cis-phytoene + 2 diphosphate. It functions in the pathway carotenoid biosynthesis; phytoene biosynthesis; all-trans-phytoene from geranylgeranyl diphosphate: step 1/1. Functionally, catalyzes the reaction from prephytoene diphosphate to phytoene. The protein is Phytoene synthase 1, chloroplastic (PSY1) of Solanum lycopersicum (Tomato).